A 408-amino-acid polypeptide reads, in one-letter code: 3-phosphoshikimate 1-carboxyvinyltransferase (408 aa).

Lys-10, Ser-11, and Arg-15 together coordinate 3-phosphoshikimate. Phosphoenolpyruvate is bound at residue Lys-10. Phosphoenolpyruvate-binding residues include Gly-79 and Arg-107. 6 residues coordinate 3-phosphoshikimate: Ser-150, Ser-151, Gln-152, Ser-179, Glu-297, and His-324. Position 152 (Gln-152) interacts with phosphoenolpyruvate. Glu-297 serves as the catalytic Proton acceptor. Phosphoenolpyruvate-binding residues include Arg-328, Arg-369, and Lys-394.

The protein belongs to the EPSP synthase family. As to quaternary structure, monomer.

The protein localises to the cytoplasm. The catalysed reaction is 3-phosphoshikimate + phosphoenolpyruvate = 5-O-(1-carboxyvinyl)-3-phosphoshikimate + phosphate. It functions in the pathway metabolic intermediate biosynthesis; chorismate biosynthesis; chorismate from D-erythrose 4-phosphate and phosphoenolpyruvate: step 6/7. Catalyzes the transfer of the enolpyruvyl moiety of phosphoenolpyruvate (PEP) to the 5-hydroxyl of shikimate-3-phosphate (S3P) to produce enolpyruvyl shikimate-3-phosphate and inorganic phosphate. In Corynebacterium efficiens (strain DSM 44549 / YS-314 / AJ 12310 / JCM 11189 / NBRC 100395), this protein is 3-phosphoshikimate 1-carboxyvinyltransferase.